A 287-amino-acid chain; its full sequence is Oxaloacetate decarboxylase (287 aa).

Serine 50 is a binding site for substrate. Aspartate 88 contributes to the Mg(2+) binding site. Positions 159 and 235 each coordinate substrate.

It belongs to the isocitrate lyase/PEP mutase superfamily. Oxaloacetate decarboxylase family. In terms of assembly, homotetramer; dimer of dimers. Mg(2+) serves as cofactor.

The enzyme catalyses oxaloacetate + H(+) = pyruvate + CO2. In terms of biological role, catalyzes the decarboxylation of oxaloacetate into pyruvate. Seems to play a role in maintaining cellular concentrations of bicarbonate and pyruvate. This Chromohalobacter salexigens (strain ATCC BAA-138 / DSM 3043 / CIP 106854 / NCIMB 13768 / 1H11) protein is Oxaloacetate decarboxylase.